The sequence spans 255 residues: DNA repair protein RecO (255 aa).

Belongs to the RecO family.

In terms of biological role, involved in DNA repair and RecF pathway recombination. The polypeptide is DNA repair protein RecO (Listeria monocytogenes serotype 4a (strain HCC23)).